Reading from the N-terminus, the 139-residue chain is Large-conductance mechanosensitive channel (139 aa).

Transmembrane regions (helical) follow at residues 14-34, 38-58, and 82-102; these read VVDL…VNSA, IFMP…YYIP, and GQFL…FLVI.

Belongs to the MscL family. As to quaternary structure, homopentamer.

It localises to the cell inner membrane. Functionally, channel that opens in response to stretch forces in the membrane lipid bilayer. May participate in the regulation of osmotic pressure changes within the cell. This chain is Large-conductance mechanosensitive channel, found in Methylobacterium radiotolerans (strain ATCC 27329 / DSM 1819 / JCM 2831 / NBRC 15690 / NCIMB 10815 / 0-1).